We begin with the raw amino-acid sequence, 399 residues long: Acetate kinase (399 aa).

Asn10 serves as a coordination point for Mg(2+). Lys17 is an ATP binding site. Residue Arg91 coordinates substrate. Residue Asp150 is the Proton donor/acceptor of the active site. ATP-binding positions include 210-214 (HLGNG), 285-287 (DFR), and 333-337 (GIGEN). Position 387 (Glu387) interacts with Mg(2+).

The protein belongs to the acetokinase family. As to quaternary structure, homodimer. Mg(2+) is required as a cofactor. It depends on Mn(2+) as a cofactor.

It localises to the cytoplasm. The catalysed reaction is acetate + ATP = acetyl phosphate + ADP. The protein operates within metabolic intermediate biosynthesis; acetyl-CoA biosynthesis; acetyl-CoA from acetate: step 1/2. Its function is as follows. Catalyzes the formation of acetyl phosphate from acetate and ATP. Can also catalyze the reverse reaction. The polypeptide is Acetate kinase (Wigglesworthia glossinidia brevipalpis).